A 385-amino-acid polypeptide reads, in one-letter code: MLSSYSSFPERSKGRLFLEKEDPQRDCYQRDRDRLIHSSAFRRLMYKTQVFSHCGDDHYRTRLTHSLEVAQIARSIARLLGLNEDLTETIALAHDIGHPPFAHIGEEALQEVAAEHYRFEHNAQVLRILGEFEHQYMDFDGLNLTWETIEGLAKHNGPIQEPHQIIEEYNGLLDLELNKQPSLEAQIVSLADDIAYSSHDIDDGLLSGVITYQDLRHLPIIGENILKFEKTFPEASKSQVMYKARRRMIRFLIYDVVDVARENIKRYLLKTVDDIRELGFPAANFSEKVGKEMKEIKAFLYNNLYFYYSIRKSRVKLKRIVKELFEVFFHDPQCLPKDYYERFRIADSMNKKAQLVCDFIANLTDSSAIREHRQFFSTCVLERDY.

The region spanning 62–197 (RLTHSLEVAQ…VSLADDIAYS (136 aa)) is the HD domain.

This sequence belongs to the dGTPase family. Type 2 subfamily.

The protein is Deoxyguanosinetriphosphate triphosphohydrolase-like protein of Neorickettsia sennetsu (strain ATCC VR-367 / Miyayama) (Ehrlichia sennetsu).